The sequence spans 156 residues: Aspartate 1-decarboxylase (156 aa).

Catalysis depends on serine 26, which acts as the Schiff-base intermediate with substrate; via pyruvic acid. Serine 26 carries the pyruvic acid (Ser) modification. Residue threonine 58 coordinates substrate. Tyrosine 59 serves as the catalytic Proton donor. Residue glycine 74–alanine 76 coordinates substrate.

The protein belongs to the PanD family. Heterooctamer of four alpha and four beta subunits. It depends on pyruvate as a cofactor. Post-translationally, is synthesized initially as an inactive proenzyme, which is activated by self-cleavage at a specific serine bond to produce a beta-subunit with a hydroxyl group at its C-terminus and an alpha-subunit with a pyruvoyl group at its N-terminus.

It localises to the cytoplasm. The enzyme catalyses L-aspartate + H(+) = beta-alanine + CO2. The protein operates within cofactor biosynthesis; (R)-pantothenate biosynthesis; beta-alanine from L-aspartate: step 1/1. Functionally, catalyzes the pyruvoyl-dependent decarboxylation of aspartate to produce beta-alanine. The polypeptide is Aspartate 1-decarboxylase (Gloeothece citriformis (strain PCC 7424) (Cyanothece sp. (strain PCC 7424))).